The chain runs to 393 residues: UPF0496 protein At2g18630 (393 aa).

A disordered region spans residues methionine 1–threonine 20. Residues valine 149–arginine 222 are a coiled coil. A run of 2 helical transmembrane segments spans residues methionine 226–alanine 246 and proline 249–cysteine 269. Residues lysine 299–histidine 356 are a coiled coil.

Belongs to the UPF0496 family.

The protein localises to the membrane. The chain is UPF0496 protein At2g18630 from Arabidopsis thaliana (Mouse-ear cress).